Here is a 307-residue protein sequence, read N- to C-terminus: Metapyrocatechase (307 aa).

VOC domains lie at 7–122 (RPGH…LYAD) and 150–269 (RFDH…VFCG). Positions 153, 214, and 265 each coordinate Fe cation.

It belongs to the extradiol ring-cleavage dioxygenase family. In terms of assembly, homotetramer. The cofactor is Fe(2+).

It carries out the reaction catechol + O2 = (2Z,4E)-2-hydroxy-6-oxohexa-2,4-dienoate + H(+). The protein operates within xenobiotic degradation; toluene degradation. In Pseudomonas aeruginosa, this protein is Metapyrocatechase (bztE).